The following is a 452-amino-acid chain: Chaperone SurA (452 aa).

The N-terminal stretch at 1 to 28 is a signal peptide; that stretch reads MKKTLRFAAVVSSLAAASALLAAAPAAA. 2 PpiC domains span residues 186–288 and 302–400; these read QQDL…RLVD and IVQT…QVLS.

The protein resides in the periplasm. The catalysed reaction is [protein]-peptidylproline (omega=180) = [protein]-peptidylproline (omega=0). Functionally, chaperone involved in the correct folding and assembly of outer membrane proteins. Recognizes specific patterns of aromatic residues and the orientation of their side chains, which are found more frequently in integral outer membrane proteins. May act in both early periplasmic and late outer membrane-associated steps of protein maturation. This chain is Chaperone SurA, found in Burkholderia lata (strain ATCC 17760 / DSM 23089 / LMG 22485 / NCIMB 9086 / R18194 / 383).